We begin with the raw amino-acid sequence, 455 residues long: Chitin deacetylase 2 (455 aa).

A signal peptide spans 1 to 19 (MIPSTAAALLTLTAGAAFA). 4 N-linked (GlcNAc...) asparagine glycosylation sites follow: Asn-86, Asn-98, Asn-122, and Asn-142. Residues 157 to 347 (MTWGLGFDDG…IKSAFNYIVP (191 aa)) form the NodB homology domain. Residue Asp-164 is the Proton acceptor of the active site. Asp-164 contacts acetate. Asp-165 serves as a coordination point for Co(2+). N-linked (GlcNAc...) asparagine glycosylation is present at Asn-168. His-214 and His-218 together coordinate Co(2+). Tyr-255 provides a ligand contact to acetate. 2 N-linked (GlcNAc...) asparagine glycosylation sites follow: Asn-270 and Asn-308. His-321 serves as the catalytic Proton donor. N-linked (GlcNAc...) asparagine glycans are attached at residues Asn-325, Asn-353, Asn-362, and Asn-377. The interval 381 to 423 (STTQKDGSSSTNTASGSGAAGSASATSSSDDSSSSGGSSGSSG) is disordered. A glycan (N-linked (GlcNAc...) asparagine) is linked at Asn-426. Residue Ser-429 is the site of GPI-anchor amidated serine attachment. A propeptide spans 430-455 (GALGMFDSLSGVGLILGGVVAGVMLL) (removed in mature form).

It belongs to the polysaccharide deacetylase family. The cofactor is Co(2+). Post-translationally, the GPI anchor is required for the attachment to the cell membrane but not for cell surface targeting.

The protein localises to the secreted. It is found in the cell wall. The protein resides in the cell membrane. The catalysed reaction is [(1-&gt;4)-N-acetyl-beta-D-glucosaminyl](n) + n H2O = chitosan + n acetate. Its function is as follows. Hydrolyzes the N-acetamido groups of N-acetyl-D-glucosamine residues in chitin to form chitosan and acetate. Chitosan is required to anchor melanin to the cell wall, for maintenance of cell wall integrity, and for proper cytokinesis. Chitosan offers an advantage during infection as it is less readily detected than chitin by host immunosurveillance mechanisms. The sequence is that of Chitin deacetylase 2 from Cryptococcus neoformans var. grubii serotype A (strain H99 / ATCC 208821 / CBS 10515 / FGSC 9487) (Filobasidiella neoformans var. grubii).